Here is a 331-residue protein sequence, read N- to C-terminus: ATP-dependent 6-phosphofructokinase (331 aa).

Glycine 12 serves as a coordination point for ATP. Residues 22–26 and 55–60 each bind ADP; these read RGVVR and RYSVSD. Residues 73–74 and 103–106 contribute to the ATP site; these read RF and GDGS. Aspartate 104 lines the Mg(2+) pocket. Residue 127-129 participates in substrate binding; that stretch reads TID. Aspartate 129 serves as the catalytic Proton acceptor. Arginine 156 is a binding site for ADP. Substrate contacts are provided by residues arginine 164 and 171 to 173; that span reads MGR. ADP contacts are provided by residues 187-189, lysine 213, and 215-217; these read GCE and KKH. Substrate contacts are provided by residues glutamate 224, arginine 245, and 251–254; that span reads HIQR.

Belongs to the phosphofructokinase type A (PFKA) family. ATP-dependent PFK group I subfamily. Prokaryotic clade 'B1' sub-subfamily. Homotetramer. Mg(2+) serves as cofactor.

The protein localises to the cytoplasm. It catalyses the reaction beta-D-fructose 6-phosphate + ATP = beta-D-fructose 1,6-bisphosphate + ADP + H(+). It participates in carbohydrate degradation; glycolysis; D-glyceraldehyde 3-phosphate and glycerone phosphate from D-glucose: step 3/4. Allosterically activated by ADP and other diphosphonucleosides, and allosterically inhibited by phosphoenolpyruvate. Its function is as follows. Catalyzes the phosphorylation of D-fructose 6-phosphate to fructose 1,6-bisphosphate by ATP, the first committing step of glycolysis. This is ATP-dependent 6-phosphofructokinase from Yersinia enterocolitica serotype O:8 / biotype 1B (strain NCTC 13174 / 8081).